Here is a 316-residue protein sequence, read N- to C-terminus: Pantothenate kinase (316 aa).

Position 96–103 (96–103) interacts with ATP; the sequence is GSVAVGKS.

This sequence belongs to the prokaryotic pantothenate kinase family.

The protein resides in the cytoplasm. The catalysed reaction is (R)-pantothenate + ATP = (R)-4'-phosphopantothenate + ADP + H(+). It functions in the pathway cofactor biosynthesis; coenzyme A biosynthesis; CoA from (R)-pantothenate: step 1/5. The chain is Pantothenate kinase from Shouchella clausii (strain KSM-K16) (Alkalihalobacillus clausii).